Here is a 331-residue protein sequence, read N- to C-terminus: MELITKEESKTNYEYGCDPYNRPIGELLKNGIVVIDKPSGPTSHEVSAWVRDILKLKLAGHGGTLDPKVTGVLPVALENTSKCISVWHMIPKEYVCLMHLHRDTEEEELLKIFKKFTGRIFQRPPLKAAVKRSLRIRKIYELELLEKDGRDVLFRVRCQSGTYIRTLAEDMGEALGTSAHMQELRRIVSGPFTEKDIVYLQDLTDAYIFWKENGDETELRKIIKPMEYGLQHINKIIVKDSAVDAICHGANVYLNGVSKLSKGIGADETVLIETLKGEAIGIGTALLNTKNVLKESKNEEDNREKYKEPIVDIERIFMSPNTYPKMWKKKK.

The Nucleophile role is filled by Asp66. The region spanning Ile233–Lys307 is the PUA domain.

This sequence belongs to the pseudouridine synthase TruB family. Type 2 subfamily.

It carries out the reaction uridine(55) in tRNA = pseudouridine(55) in tRNA. Functionally, could be responsible for synthesis of pseudouridine from uracil-55 in the psi GC loop of transfer RNAs. This is Probable tRNA pseudouridine synthase B from Methanococcus aeolicus (strain ATCC BAA-1280 / DSM 17508 / OCM 812 / Nankai-3).